Here is a 399-residue protein sequence, read N- to C-terminus: Tryptophan synthase beta chain (399 aa).

Lys90 is modified (N6-(pyridoxal phosphate)lysine).

The protein belongs to the TrpB family. In terms of assembly, tetramer of two alpha and two beta chains. The cofactor is pyridoxal 5'-phosphate.

The catalysed reaction is (1S,2R)-1-C-(indol-3-yl)glycerol 3-phosphate + L-serine = D-glyceraldehyde 3-phosphate + L-tryptophan + H2O. It participates in amino-acid biosynthesis; L-tryptophan biosynthesis; L-tryptophan from chorismate: step 5/5. In terms of biological role, the beta subunit is responsible for the synthesis of L-tryptophan from indole and L-serine. This chain is Tryptophan synthase beta chain, found in Phocaeicola vulgatus (strain ATCC 8482 / DSM 1447 / JCM 5826 / CCUG 4940 / NBRC 14291 / NCTC 11154) (Bacteroides vulgatus).